A 241-amino-acid polypeptide reads, in one-letter code: Carboxy-S-adenosyl-L-methionine synthase (241 aa).

S-adenosyl-L-methionine-binding positions include Y38, 63 to 65, 88 to 89, 116 to 117, N131, and R198; these read GCS, DN, and DI.

The protein belongs to the class I-like SAM-binding methyltransferase superfamily. Cx-SAM synthase family. Homodimer.

The catalysed reaction is prephenate + S-adenosyl-L-methionine = carboxy-S-adenosyl-L-methionine + 3-phenylpyruvate + H2O. In terms of biological role, catalyzes the conversion of S-adenosyl-L-methionine (SAM) to carboxy-S-adenosyl-L-methionine (Cx-SAM). In Haemophilus influenzae (strain PittEE), this protein is Carboxy-S-adenosyl-L-methionine synthase.